A 558-amino-acid chain; its full sequence is Aspartate--tRNA ligase 2, cytoplasmic (558 aa).

Low complexity predominate over residues 1–18 (MSSESEIPPLSSSTAAAE). Residues 1–57 (MSSESEIPPLSSSTAAAEESGEKTSKKAAKKEAAKLEKLRRRQEQEEATRRTASISL) form a disordered region. Residue Ser-2 is modified to N-acetylserine. Basic and acidic residues predominate over residues 20–50 (SGEKTSKKAAKKEAAKLEKLRRRQEQEEATR). Residues 110-195 (VLIRGRVHTN…QVEIQVRKVY (86 aa)) constitute a DNA-binding region (OB). Glu-286 provides a ligand contact to L-aspartate. Residues 308 to 311 (QLHK) form an aspartate region. Arg-330 serves as a coordination point for L-aspartate. Residues 330–332 (RAE), 338–340 (RHL), and Glu-481 each bind ATP. Residues Glu-481 and Ser-484 each contribute to the Mg(2+) site. L-aspartate is bound by residues Ser-484 and Arg-488. 529-532 (GLER) lines the ATP pocket.

The protein belongs to the class-II aminoacyl-tRNA synthetase family. Type 2 subfamily.

It localises to the cytoplasm. Its subcellular location is the cytosol. It is found in the endoplasmic reticulum. The enzyme catalyses tRNA(Asp) + L-aspartate + ATP = L-aspartyl-tRNA(Asp) + AMP + diphosphate. Functionally, catalyzes the specific attachment of an amino acid to its cognate tRNA in a 2 step reaction: the amino acid (AA) is first activated by ATP to form AA-AMP and then transferred to the acceptor end of the tRNA. Involved in the perception of beta-aminobutyric acid (BABA) and required for BABA priming effect in disease resistance. This Arabidopsis thaliana (Mouse-ear cress) protein is Aspartate--tRNA ligase 2, cytoplasmic.